We begin with the raw amino-acid sequence, 994 residues long: Glycine dehydrogenase (decarboxylating) (994 aa).

Residues 1–20 (MTDHAENRCGLEGPRPFSSR) are disordered. Lys-716 carries the post-translational modification N6-(pyridoxal phosphate)lysine.

It belongs to the GcvP family. The glycine cleavage system is composed of four proteins: P, T, L and H. Pyridoxal 5'-phosphate is required as a cofactor.

It catalyses the reaction N(6)-[(R)-lipoyl]-L-lysyl-[glycine-cleavage complex H protein] + glycine + H(+) = N(6)-[(R)-S(8)-aminomethyldihydrolipoyl]-L-lysyl-[glycine-cleavage complex H protein] + CO2. Functionally, the glycine cleavage system catalyzes the degradation of glycine. The P protein binds the alpha-amino group of glycine through its pyridoxal phosphate cofactor; CO(2) is released and the remaining methylamine moiety is then transferred to the lipoamide cofactor of the H protein. This chain is Glycine dehydrogenase (decarboxylating), found in Cutibacterium acnes (strain DSM 16379 / KPA171202) (Propionibacterium acnes).